A 239-amino-acid chain; its full sequence is MVQHLTAEEIIQYISDAKKSTPIKVYLNGNFEGITYPESFKVFGSEQSKVIFCEADDWKPFYEAYGSQFEDIEIEMDRRNSAIPLKDLTNTNARIEPGAFIREQAIIEDGAVVMMGATINIGAVVGEGTMIDMNATLGGRATTGKNVHVGAGAVLAGVIEPPSASPVIIEDDVLIGANAVILEGVRVGKGAIVAAGAIVTQDVPAGAVVAGTPCKVIKAASEVQDTKKEIVAALRKLND.

Belongs to the transferase hexapeptide repeat family. DapH subfamily.

It catalyses the reaction (S)-2,3,4,5-tetrahydrodipicolinate + acetyl-CoA + H2O = L-2-acetamido-6-oxoheptanedioate + CoA. It functions in the pathway amino-acid biosynthesis; L-lysine biosynthesis via DAP pathway; LL-2,6-diaminopimelate from (S)-tetrahydrodipicolinate (acetylase route): step 1/3. In terms of biological role, catalyzes the transfer of an acetyl group from acetyl-CoA to tetrahydrodipicolinate. This is 2,3,4,5-tetrahydropyridine-2,6-dicarboxylate N-acetyltransferase from Staphylococcus aureus (strain Newman).